The primary structure comprises 475 residues: RNA pseudouridine synthase 3, mitochondrial (475 aa).

A mitochondrion-targeting transit peptide spans 1–15 (MLCRRRRVGAAVRWL). The tract at residues 40–74 (RLGKPKPGPRPRQLLSLPPFPGGGDGDPLPGRKAA) is disordered. In terms of domain architecture, S4 RNA-binding spans 90–160 (ADVPQEVVQA…GEIKKRYETI (71 aa)). Residue Asp-230 is part of the active site.

It belongs to the pseudouridine synthase RluA family.

The protein resides in the mitochondrion. It carries out the reaction a uridine in RNA = a pseudouridine in RNA. The sequence is that of RNA pseudouridine synthase 3, mitochondrial from Oryza sativa subsp. japonica (Rice).